The chain runs to 1826 residues: ATPase family AAA domain-containing protein 5 (1826 aa).

Phosphoserine is present on serine 44. Residue lysine 127 forms a Glycyl lysine isopeptide (Lys-Gly) (interchain with G-Cter in SUMO2) linkage. Disordered regions lie at residues 170–254 (SIED…KRAD), 282–311 (PAVP…CEPS), 323–367 (AQVH…RKSN), 398–572 (QQFM…EPGS), 588–623 (RSCS…ARTS), 647–684 (KFTR…TSKN), and 709–729 (VVPL…KSPE). Residue serine 215 is modified to Phosphoserine. Over residues 243–254 (NDSRTHATKRAD) the composition is skewed to basic and acidic residues. Low complexity predominate over residues 298–311 (SGSEGELSGSCEPS). Serine 351 and serine 366 each carry phosphoserine. The segment at 365-381 (KSNVVIQEGQLELAVLE) is interaction with WDR48. The span at 418 to 442 (KPLEKQKDPSEKSVHEGDSSSEKII) shows a compositional bias: basic and acidic residues. A compositionally biased stretch (polar residues) spans 445–456 (PNIQRVSSQGCL). Positions 459–468 (HADRGSFPKE) are enriched in basic and acidic residues. A compositionally biased stretch (basic residues) spans 469 to 481 (KSKKPNKKGKKTR). A compositionally biased stretch (basic and acidic residues) spans 487–505 (NREENIQKEKTAFSLKDEQ). The segment covering 540-559 (DSVQMSLCNRNKSRSSSTPT) has biased composition (polar residues). Phosphoserine is present on residues serine 591 and serine 603. Phosphoserine occurs at positions 727 and 801. The interval 965–1034 (GKQASPQLQP…NLDPSRDSGT (70 aa)) is disordered. The span at 1006–1019 (EEMKGRSKDLDERI) shows a compositional bias: basic and acidic residues. The residue at position 1104 (serine 1104) is a Phosphoserine. An ATP-binding site is contributed by 1119-1126 (GPTGVGKT). The disordered stretch occupies residues 1183–1216 (YNIGKSPKKLNSPGKVVTSPRKLPPSSPKTSGQK). The LXCXE motif signature appears at 1415–1419 (LVCSE). Disordered regions lie at residues 1527–1552 (PASM…RKQK) and 1592–1611 (SNPE…VPQP). The tract at residues 1612-1701 (PKTLAEKKCC…ATAEALSFTE (90 aa)) is interaction with RAD51 and RFC5.

Belongs to the AAA ATPase family. As to quaternary structure, component of a heteropentameric replication factor ATAD5 RFC-like complex composed of one large subunit (ATAD5) and four small subunits (RFC2, RFC3, RFC4 and RFC5). Within the ATAD5 RFC-like complex, interacts with RFC2, RFC4 and RFC5. Within the ATAD5 RFC-like complex, interacts directly via-N terminal with RAD51; the interactions is enhanced under replication stress. Interacts with RB1 predominantly in G1 phase via its LXCXE motif. Interacts with RAD9A in growing cells. The interaction with RAD9A is reduced after exposure to DNA replication-inhibiting agents. Interacts with BRD4. Interacts with PCNA. Interacts with deubiquitinating enzyme USP1, and its associated factor, WDR48. ATR may stimulate the RAD9A dissociation. In terms of tissue distribution, expressed ubiquitously in all cell lines like teratocarcinoma, cell lymphoma, lymphoma.

Its subcellular location is the nucleus. In terms of biological role, has an important role in DNA replication and in maintaining genome integrity during replication stress. Involved in a RAD9A-related damage checkpoint, a pathway that is important in determining whether DNA damage is compatible with cell survival or whether it requires cell elimination by apoptosis. Modulates the RAD9A interaction with BCL2 and thereby induces DNA damage-induced apoptosis. Promotes PCNA deubiquitination by recruiting the ubiquitin-specific protease 1 (USP1) and WDR48 thereby down-regulating the error-prone damage bypass pathway. As component of the ATAD5 RFC-like complex, regulates the function of the DNA polymerase processivity factor PCNA by unloading the ring-shaped PCNA homotrimer from DNA after replication during the S phase of the cell cycle. This seems to be dependent on its ATPase activity. Plays important roles in restarting stalled replication forks under replication stress, by unloading the PCNA homotrimer from DNA and recruiting RAD51 possibly through an ATR-dependent manner. Ultimately this enables replication fork regression, breakage, and eventual fork restart. Both the PCNA unloading activity and the interaction with WDR48 are required to efficiently recruit RAD51 to stalled replication forks. Promotes the generation of MUS81-mediated single-stranded DNA-associated breaks in response to replication stress, which is an alternative pathway to restart stalled/regressed replication forks. The chain is ATPase family AAA domain-containing protein 5 (Atad5) from Mus musculus (Mouse).